We begin with the raw amino-acid sequence, 154 residues long: MSDELTKEQTALLRNAFNAFDPEKNGYINTAMVGTILSMLGHQLDDATLADIIAEVDEDGSGQIEFEEFTTLAARFLVEEDAEAMMAELKEAFRLYDKEGNGYITTGVLREILRELDDKLTNDDLDMMIEEIDSDGSGTVDFDEFMEVMTGGDD.

4 EF-hand domains span residues 8–43 (EQTA…LGHQ), 44–79 (LDDA…FLVE), 84–119 (AMMA…LDDK), and 120–154 (LTND…GGDD). Ca(2+) is bound by residues Asp57, Asp59, Ser61, Gln63, and Glu68. Residues Asp133, Asp135, Ser137, Thr139, and Glu144 each coordinate Ca(2+).

This sequence belongs to the troponin C family. In terms of tissue distribution, present only in adult muscles.

This chain is Troponin C, isoform 1 (TpnC41C), found in Drosophila melanogaster (Fruit fly).